A 323-amino-acid polypeptide reads, in one-letter code: tRNA N6-adenosine threonylcarbamoyltransferase (323 aa).

Fe cation contacts are provided by histidine 106, histidine 110, and tyrosine 127. Residues 127–131 (YVSGA), aspartate 159, glycine 172, glutamate 176, and asparagine 255 contribute to the substrate site. Aspartate 283 provides a ligand contact to Fe cation.

This sequence belongs to the KAE1 / TsaD family. In terms of assembly, monomer. Component of the KEOPS complex that consists of Kae1, Bud32, Cgi121 and Pcc1; the whole complex dimerizes. Fe(2+) serves as cofactor.

It is found in the cytoplasm. It carries out the reaction L-threonylcarbamoyladenylate + adenosine(37) in tRNA = N(6)-L-threonylcarbamoyladenosine(37) in tRNA + AMP + H(+). Required for the formation of a threonylcarbamoyl group on adenosine at position 37 (t(6)A37) in tRNAs that read codons beginning with adenine. Is a component of the KEOPS complex that is probably involved in the transfer of the threonylcarbamoyl moiety of threonylcarbamoyl-AMP (TC-AMP) to the N6 group of A37. Kae1 likely plays a direct catalytic role in this reaction, but requires other protein(s) of the complex to fulfill this activity. In Methanocella arvoryzae (strain DSM 22066 / NBRC 105507 / MRE50), this protein is tRNA N6-adenosine threonylcarbamoyltransferase.